The primary structure comprises 262 residues: MILDDLVAATCQNMLARQAQKSLHDLQKEAAHITVSREFPFEKSLAQQKISVVAEIKQASPSKGQIVPSSEFDYQGIAKDYEVAGVDAISVLTEENYFKGSLDILKTVAADSATPVLRKDFTIDPYMIYEAKVAGSQIILLIVAILTDEQLKEYLSLANELGLSVIVEAHNEEEILRAVKANARIIGVNNRNLKDFTVDFDNTKRLRQLVPPEILFISESGIKDRSDVVTLEQIGVDGILVGETFMKAADKLAAIQQLRGEK.

This sequence belongs to the TrpC family.

The catalysed reaction is 1-(2-carboxyphenylamino)-1-deoxy-D-ribulose 5-phosphate + H(+) = (1S,2R)-1-C-(indol-3-yl)glycerol 3-phosphate + CO2 + H2O. It functions in the pathway amino-acid biosynthesis; L-tryptophan biosynthesis; L-tryptophan from chorismate: step 4/5. This chain is Indole-3-glycerol phosphate synthase, found in Leuconostoc mesenteroides subsp. mesenteroides (strain ATCC 8293 / DSM 20343 / BCRC 11652 / CCM 1803 / JCM 6124 / NCDO 523 / NBRC 100496 / NCIMB 8023 / NCTC 12954 / NRRL B-1118 / 37Y).